A 545-amino-acid chain; its full sequence is Adenine deaminase (545 aa).

Belongs to the metallo-dependent hydrolases superfamily. Adenine deaminase family. Mn(2+) is required as a cofactor.

The enzyme catalyses adenine + H2O + H(+) = hypoxanthine + NH4(+). The chain is Adenine deaminase from Salinibacter ruber (strain DSM 13855 / M31).